Consider the following 393-residue polypeptide: Pigment production hydroxylase (393 aa).

Functionally, involved in pigment production acting as a hydroxylase that transforms indole to indoxyl, resulting in the formation of indigo. In Rhodococcus erythropolis (Arthrobacter picolinophilus), this protein is Pigment production hydroxylase.